The primary structure comprises 435 residues: 5-methylthioadenosine/S-adenosylhomocysteine deaminase (435 aa).

Zn(2+) contacts are provided by His-65 and His-67. Substrate contacts are provided by Glu-94, Arg-150, and His-189. A Zn(2+)-binding site is contributed by His-216. Substrate contacts are provided by Glu-219 and Asp-304. Asp-304 contacts Zn(2+).

Belongs to the metallo-dependent hydrolases superfamily. MTA/SAH deaminase family. Requires Zn(2+) as cofactor.

It catalyses the reaction S-adenosyl-L-homocysteine + H2O + H(+) = S-inosyl-L-homocysteine + NH4(+). It carries out the reaction S-methyl-5'-thioadenosine + H2O + H(+) = S-methyl-5'-thioinosine + NH4(+). Functionally, catalyzes the deamination of 5-methylthioadenosine and S-adenosyl-L-homocysteine into 5-methylthioinosine and S-inosyl-L-homocysteine, respectively. Is also able to deaminate adenosine. This Bacillus cereus (strain ZK / E33L) protein is 5-methylthioadenosine/S-adenosylhomocysteine deaminase.